A 159-amino-acid chain; its full sequence is Major allergen Mal d 1 (159 aa).

This sequence belongs to the BetVI family.

This is Major allergen Mal d 1 from Malus domestica (Apple).